We begin with the raw amino-acid sequence, 518 residues long: Alpha-ionylideneethane synthase abl3 (518 aa).

Disordered regions lie at residues 294 to 355 and 440 to 466; these read AAPG…SVFE and KAPP…QRSK. Residues 299 to 339 show a composition bias toward low complexity; the sequence is TSSDNSSDNRSSSISSTSSTGTDGSGAGDASSVHSSGVHSD.

Belongs to the alpha-ionylideneethane synthase family.

It participates in hormone biosynthesis. In terms of biological role, alpha-ionylideneethane synthase involved in the biosynthesis of abscisic acid (ABA), a phytohormone that acts antagonistically toward salicylic acid (SA), jasmonic acid (JA) and ethylene (ETH) signaling, to impede plant defense responses. During pathogen-host interaction, ABA plays a dual role in disease severity by increasing plant susceptibility and accelerating pathogenesis in the fungus itself. The first step of the pathway catalyzes the reaction from farnesyl diphosphate to alpha-ionylideneethane performed by the alpha-ionylideneethane synthase ABA3 via a three-step reaction mechanism involving 2 neutral intermediates, beta-farnesene and allofarnesene. The cytochrome P450 monooxygenase ABA1 might then be involved in the conversion of alpha-ionylideneethane to alpha-ionylideneacetic acid. Alpha-ionylideneacetic acid is further converted to abscisic acid in 2 steps involving the cytochrome P450 monooxygenase ABA2 and the short-chain dehydrogenase/reductase ABA4, via the intermediates 1'-deoxy-ABA or 1',4'-trans-diol-ABA, depending on the order of action of these 2 enzymes. ABA2 is responsible for the hydroxylation of carbon atom C-1' and ABA4 might be involved in the oxidation of the C-4' carbon atom. This is Alpha-ionylideneethane synthase abl3 from Pyricularia oryzae (strain Y34) (Rice blast fungus).